The chain runs to 291 residues: DNA N6-methyl adenine demethylase (291 aa).

The Fe2OG dioxygenase domain maps to 85–256 (GLTLIHNFLS…RGRRIALTMR (172 aa)). Position 171-173 (171-173 (LEY)) interacts with 2-oxoglutarate. Residues histidine 184, aspartate 186, and histidine 239 each coordinate Fe cation.

Belongs to the alkB family. In terms of assembly, interacts with top-2; the interaction is required for localization of top-2 to DNA. Also interacts with mtss-1, his-24, ule-3, C18B2.3, pgl-1, ceh-93, mcm-4 and F37C4.5. Requires Fe(2+) as cofactor.

Its subcellular location is the nucleus. It catalyses the reaction an N(6)-methyl-2'-deoxyadenosine in DNA + 2-oxoglutarate + O2 = a 2'-deoxyadenosine in DNA + formaldehyde + succinate + CO2. Its function is as follows. Dioxygenase that specifically demethylates DNA methylated on the 6th position of adenine (N(6)-methyladenosine) DNA. N(6)-methyladenosine (m6A) DNA is involved in epigenetic transgenerational inheritance. Plays an essential role in DNA replication and repair in the germline during meiosis. Binds to components of the DNA replication machinery such as top-2, and directs their localization to DNA to control DNA replication. The polypeptide is DNA N6-methyl adenine demethylase (Caenorhabditis elegans).